The following is a 344-amino-acid chain: Nuclear distribution protein nudE-like 1-B (344 aa).

The stretch at 13–190 (KEEIVYWREL…LAVRERQTDG (178 aa)) forms a coiled coil. Disordered stretches follow at residues 186 to 209 (RQTD…TDSS) and 325 to 344 (PPGV…PLSV). A compositionally biased stretch (pro residues) spans 333–344 (PPSPPGLLPLSV).

It belongs to the nudE family. Post-translationally, phosphorylated in mitosis.

It localises to the cytoplasm. Its subcellular location is the cytoskeleton. The protein resides in the microtubule organizing center. The protein localises to the centrosome. It is found in the spindle. Its function is as follows. Required for organization of the cellular microtubule array and microtubule anchoring at the centrosome. Positively regulates the activity of the minus-end directed microtubule motor protein dynein. May enhance dynein-mediated microtubule sliding by targeting dynein to the microtubule plus end. Positively regulates lysosome peripheral distribution and ruffled border formation in osteoclasts. This Xenopus laevis (African clawed frog) protein is Nuclear distribution protein nudE-like 1-B (ndel1-b).